A 426-amino-acid polypeptide reads, in one-letter code: Glutamate-1-semialdehyde 2,1-aminomutase (426 aa).

Lys265 is modified (N6-(pyridoxal phosphate)lysine).

Belongs to the class-III pyridoxal-phosphate-dependent aminotransferase family. HemL subfamily. As to quaternary structure, homodimer. It depends on pyridoxal 5'-phosphate as a cofactor.

Its subcellular location is the cytoplasm. It catalyses the reaction (S)-4-amino-5-oxopentanoate = 5-aminolevulinate. Its pathway is porphyrin-containing compound metabolism; protoporphyrin-IX biosynthesis; 5-aminolevulinate from L-glutamyl-tRNA(Glu): step 2/2. In Actinobacillus pleuropneumoniae serotype 3 (strain JL03), this protein is Glutamate-1-semialdehyde 2,1-aminomutase.